A 661-amino-acid chain; its full sequence is Galactan 5-O-arabinofuranosyltransferase (661 aa).

13 consecutive transmembrane segments (helical) span residues 26 to 46, 64 to 84, 108 to 128, 194 to 214, 217 to 237, 243 to 263, 265 to 285, 286 to 306, 312 to 332, 362 to 382, 393 to 413, 418 to 438, and 458 to 478; these read LVAIVGAAILAFAFALVLWMG, VASATIAAVLIVTGFLTWLWL, ALTYLASYLSPAALVVAVLAI, AFQPWAIVSMAVAASVLVPVW, ITGSLPVATGIALVTTCIILA, PYAAIVAMGIPAMLVLASRIA, GDKFALAGGIIYLGVSATFYT, LFTGAIALSAVAVCIVVAAIV, PLLWLAVLGGGSIVIALISWG, VPFLASSVVGLLCLVGLIYLV, MWVGIAVFYAWMGMSMAITLL, LGFRLDTVLVLIFATAGVLGI, and TATHLTNLIVVLVLLGGLYYA.

This sequence belongs to the glycosyltransferase 85 family.

It localises to the cell membrane. It catalyses the reaction Adds an alpha-D-arabinofuranosyl group from trans,octacis-decaprenylphospho-beta-D-arabinofuranose at the 5-O-position of the eighth, tenth and twelfth galactofuranose unit of the galactofuranan chain of [beta-D-galactofuranosyl-(1-&gt;5)-beta-D-galactofuranosyl-(1-&gt;6)]14-beta-D-galactofuranosyl-(1-&gt;5)-beta-D-galactofuranosyl-(1-&gt;4)-alpha-L-rhamnopyranosyl-(1-&gt;3)-N-acetyl-alpha-D-glucosaminyl-diphospho-trans,octacis-decaprenol.. Its pathway is cell wall biogenesis; cell wall polysaccharide biosynthesis. Involved in the biosynthesis of the arabinogalactan (AG) region of the mycolylarabinogalactan-peptidoglycan (mAGP) complex, an essential component of the cell wall. Catalyzes the addition of the first key arabinofuranosyl (Araf) residue from the sugar donor decaprenyl-phospho-arabinose (DPA) on the C-5 of a 6-linked galactofuranosyl (Galf) of the galactan domain, thus 'priming' the galactan for further elaboration by other arabinofuranosyltransferases. This chain is Galactan 5-O-arabinofuranosyltransferase, found in Corynebacterium glutamicum (strain ATCC 13032 / DSM 20300 / JCM 1318 / BCRC 11384 / CCUG 27702 / LMG 3730 / NBRC 12168 / NCIMB 10025 / NRRL B-2784 / 534).